Consider the following 464-residue polypeptide: tRNA modification GTPase MnmE (464 aa).

Arg27, Glu90, and Lys129 together coordinate (6S)-5-formyl-5,6,7,8-tetrahydrofolate. In terms of domain architecture, TrmE-type G spans 222-384 (GITLVLAGSV…LYDKIRTLIS (163 aa)). GTP contacts are provided by residues 232-237 (NAGKSS), 251-257 (SSYPGTT), and 276-279 (DTAG). Residues Ser236 and Thr257 each contribute to the Mg(2+) site. Residue Lys464 participates in (6S)-5-formyl-5,6,7,8-tetrahydrofolate binding.

This sequence belongs to the TRAFAC class TrmE-Era-EngA-EngB-Septin-like GTPase superfamily. TrmE GTPase family. Homodimer. Heterotetramer of two MnmE and two MnmG subunits. Requires K(+) as cofactor.

The protein resides in the cytoplasm. In terms of biological role, exhibits a very high intrinsic GTPase hydrolysis rate. Involved in the addition of a carboxymethylaminomethyl (cmnm) group at the wobble position (U34) of certain tRNAs, forming tRNA-cmnm(5)s(2)U34. In Borreliella afzelii (strain PKo) (Borrelia afzelii), this protein is tRNA modification GTPase MnmE.